Reading from the N-terminus, the 146-residue chain is MKIYVDADACPVKDVIIFEATKAKIPVTLVTSFSHYSNAEQPKSVETIYVDSGADAADYRIMQLAQKEDLIVTQDYGLASLALAKGCIVLHHKGYKYTNDNIEQLLQTRYLSAMVRKSGKRTKGPKPFTAEDKEKFRALFKSMIAL.

It belongs to the UPF0178 family.

This chain is UPF0178 protein BCA_3127, found in Bacillus cereus (strain 03BB102).